Reading from the N-terminus, the 476-residue chain is Angiotensinogen (476 aa).

Residues M1 to G24 form the signal peptide. C42 and C161 are oxidised to a cystine. N-linked (GlcNAc...) asparagine glycosylation is found at N295, N319, N362, and N401.

This sequence belongs to the serpin family. Post-translationally, in response to low blood pressure, the enzyme renin/REN cleaves angiotensinogen to produce angiotensin-1. Angiotensin-1 is a substrate of ACE (angiotensin converting enzyme) that removes a dipeptide to yield the physiologically active peptide angiotensin-2. Angiotensin-1 and angiotensin-2 can be further processed to generate angiotensin-3, angiotensin-4. Angiotensin 1-9 is cleaved from angiotensin-1 by ACE2 and can be further processed by ACE to produce angiotensin 1-7, angiotensin 1-5 and angiotensin 1-4. Angiotensin 1-7 has also been proposed to be cleaved from angiotensin-2 by ACE2 or from angiotensin-1 by MME (neprilysin). The disulfide bond is labile. Angiotensinogen is present in the circulation in a near 40:60 ratio with the oxidized disulfide-bonded form, which preferentially interacts with receptor-bound renin.

It localises to the secreted. In terms of biological role, essential component of the renin-angiotensin system (RAS), a potent regulator of blood pressure, body fluid and electrolyte homeostasis. Acts directly on vascular smooth muscle as a potent vasoconstrictor, affects cardiac contractility and heart rate through its action on the sympathetic nervous system, and alters renal sodium and water absorption through its ability to stimulate the zona glomerulosa cells of the adrenal cortex to synthesize and secrete aldosterone. Acts by binding to angiotensin receptors AGTR1 and AGTR2. Also binds the DEAR/FBXW7-AS1 receptor. Functionally, stimulates aldosterone release. Its function is as follows. Is a ligand for the G-protein coupled receptor MAS1. Has vasodilator and antidiuretic effects. Has an antithrombotic effect that involves MAS1-mediated release of nitric oxide from platelets. The sequence is that of Angiotensinogen (AGT) from Bos taurus (Bovine).